Reading from the N-terminus, the 100-residue chain is MAKKSLIYREKKRQKLEEKYHLIRRSSKKEISKIPSLSDKWKIHGKLQSPPRNSAPTRLHRRCFSTGRPRATYRDFGLSGHILREMVHACLLPGATRSSW.

The protein belongs to the universal ribosomal protein uS14 family. In terms of assembly, part of the 30S ribosomal subunit.

Its subcellular location is the plastid. The protein localises to the chloroplast. In terms of biological role, binds 16S rRNA, required for the assembly of 30S particles. The chain is Small ribosomal subunit protein uS14c from Aethionema cordifolium (Lebanon stonecress).